Reading from the N-terminus, the 209-residue chain is Large ribosomal subunit protein uL3 (209 aa).

Gln150 is modified (N5-methylglutamine).

It belongs to the universal ribosomal protein uL3 family. As to quaternary structure, part of the 50S ribosomal subunit. Forms a cluster with proteins L14 and L19. Post-translationally, methylated by PrmB.

One of the primary rRNA binding proteins, it binds directly near the 3'-end of the 23S rRNA, where it nucleates assembly of the 50S subunit. The polypeptide is Large ribosomal subunit protein uL3 (Escherichia coli O139:H28 (strain E24377A / ETEC)).